The primary structure comprises 125 residues: Small ribosomal subunit protein eS6 (125 aa).

The protein belongs to the eukaryotic ribosomal protein eS6 family.

The chain is Small ribosomal subunit protein eS6 from Thermococcus onnurineus (strain NA1).